Consider the following 314-residue polypeptide: Signal peptidase I (314 aa).

Residues 5–25 traverse the membrane as a helical segment; the sequence is LTIFLLISTLVTGIFWSFYCI. At 26 to 63 the chain is on the cytoplasmic side; that stretch reads KSFKNYLINKKIINNNNFHQEKIEKSKNKTYFLKSLAS. Residues 64–84 traverse the membrane as a helical segment; the sequence is FFPIFLAIFIIRSFIYEPFQI. Topologically, residues 85–314 are extracellular; it reads PSGSMMPTLL…IRINRIGSIH (230 aa). Active-site residues include S88 and K143.

It belongs to the peptidase S26 family.

The protein localises to the cell membrane. It catalyses the reaction Cleavage of hydrophobic, N-terminal signal or leader sequences from secreted and periplasmic proteins.. The protein is Signal peptidase I (lepB) of Buchnera aphidicola subsp. Acyrthosiphon pisum (strain APS) (Acyrthosiphon pisum symbiotic bacterium).